The following is a 331-amino-acid chain: NADH-quinone oxidoreductase subunit H (331 aa).

The next 8 helical transmembrane spans lie at 13–33, 80–100, 113–133, 159–179, 183–203, 249–269, 273–293, and 311–331; these read FLISSATVIFLVLNIAAVLTL, WVFLAAPIAMFLPAAAVWLVI, IGLVYFFAITSIGALGVIMAG, LILSLLGVAMLTGSLSMVDIV, AGGFWNWIIWPQLPMFLAFFV, VMSAVASTLFLGGWQPPLPFL, VFNWLWLGIKTTLLIFVFQWI, and KILVPVTILWLFVTAGAMLVI.

It belongs to the complex I subunit 1 family. In terms of assembly, NDH-1 is composed of 14 different subunits. Subunits NuoA, H, J, K, L, M, N constitute the membrane sector of the complex.

The protein localises to the cell membrane. It catalyses the reaction a quinone + NADH + 5 H(+)(in) = a quinol + NAD(+) + 4 H(+)(out). In terms of biological role, NDH-1 shuttles electrons from NADH, via FMN and iron-sulfur (Fe-S) centers, to quinones in the respiratory chain. The immediate electron acceptor for the enzyme in this species is believed to be ubiquinone. Couples the redox reaction to proton translocation (for every two electrons transferred, four hydrogen ions are translocated across the cytoplasmic membrane), and thus conserves the redox energy in a proton gradient. This subunit may bind ubiquinone. This Rubrobacter xylanophilus (strain DSM 9941 / JCM 11954 / NBRC 16129 / PRD-1) protein is NADH-quinone oxidoreductase subunit H.